The primary structure comprises 128 residues: Con-Ins F2b (128 aa).

A signal peptide spans 1–24 (MTTSSYFLLVALGLLLYVCRSSFG). Cystine bridges form between C29/C104, C41/C107, C53/C120, and C106/C111. Positions 59 to 89 (LQGGTGKKRGRASLLRKRRAFLSMLKARAKR) are cleaved as a propeptide — c peptide. 4-carboxyglutamate; partial is present on E115. Position 127 is a serine amide (S127).

The protein belongs to the insulin family. In terms of assembly, heterodimer of A and B chains; disulfide-linked. In terms of tissue distribution, expressed by the venom gland.

The protein localises to the secreted. In terms of biological role, this venom insulin facilitates prey capture by rapidly inducing hypoglycemic shock. Intraperitoneal injection of this peptide into zebrafish lowers blood glucose with the same potency than human insulin. In vivo, when applied to water, this peptide reduces overall locomotor activity of zebrafish larvae, observed as a significant decrease in the percentage of time spent swimming and movement frequency. The protein is Con-Ins F2b of Conus floridulus (Cone snail).